The following is a 1499-amino-acid chain: Rho GTPase-activating protein 35 (1499 aa).

The tract at residues 1-266 is has GTPase activity, required for proper localization; the sequence is MMMARKQDVR…IPYFEALKQQ (266 aa). GTP is bound by residues K28, 33-37, L52, S56, 95-97, 201-203, and 229-231; these read IGKSC, EQT, KCD, and SAR. FF domains are found at residues 270-327, 368-422, 429-483, and 485-550; these read IATA…HIHR, KLLE…HLEK, RAEM…HQKQ, and IDRA…HIHF. Y308 is subject to Phosphotyrosine. Position 589 is a phosphoserine (S589). One can recognise a pG1 pseudoGTPase domain in the interval 592 to 767; it reads DLNIDRINLV…LLDSKRNLNL (176 aa). 2 positions are modified to phosphoserine: S770 and S773. One can recognise a pG2 pseudoGTPase domain in the interval 783–947; that stretch reads RIVMCLMCGD…FKDVVEKKNI (165 aa). S970, S975, S985, and S1072 each carry phosphoserine. A Phosphotyrosine modification is found at Y1087. Y1105 carries the phosphotyrosine; by ABL2 and PTK6 modification. Over residues 1124-1141 the composition is skewed to polar residues; that stretch reads KAQSNGSGNGSDSEMDTS. Residues 1124-1148 form a disordered region; that stretch reads KAQSNGSGNGSDSEMDTSSLERGRK. Residues S1134, S1142, S1150, S1176, S1179, and S1221 each carry the phosphoserine modification. The segment at 1177–1207 is disordered; sequence VGSDDELGPIRKKEEDQASQGYKGDNAVIPY. A required for phospholipid binding and regulation of the substrate preference region spans residues 1213–1236; it reads PRRRNILRSLRRNTKKPKPKPRPS. T1226 is modified (phosphothreonine). Position 1236 is a phosphoserine (S1236). The Rho-GAP domain maps to 1249 to 1436; it reads VPLTTVVTPE…LFIQQCPFFF (188 aa). The tract at residues 1446 to 1499 is disordered; sequence GAAPGSPSAMAPTVPFLTSTPATSQPSPPQSPPPTPQSPMQPLLSSQLQAEHTL. Residues 1448-1470 show a composition bias toward low complexity; it reads APGSPSAMAPTVPFLTSTPATSQ. Over residues 1471-1484 the composition is skewed to pro residues; it reads PSPPQSPPPTPQSP. S1472 and S1476 each carry phosphoserine. Phosphothreonine is present on T1480. Residue S1483 is modified to Phosphoserine. Over residues 1485-1499 the composition is skewed to low complexity; it reads MQPLLSSQLQAEHTL.

Interacts with the general transcription factor GTF2I, the interaction sequesters GTF2I in the cytoplasm. Interacts with RASA1. Phosphorylation of Tyr-1105 by PTK6 promotes the association with RASA1, inactivating RHOA while activating RAS. Phosphorylation at Tyr-308 by PDGFRA inhibits binding to GTF2I. Phosphorylated by PRKCA at Ser-1221 and Thr-1226, induces relocalization from the cytoplasm to regions of plasma membrane ruffling and prevents the binding and substrate specificity regulation by phospholipids. In brain, phosphorylated by FYN and SRC. During focal adhesion formation, phosphorylated by MAPK1 and MAPK3 at the C-terminal region, probably at Ser-1451, Ser-1476, Thr-1480 and Ser-1483. Phosphorylation by MAPK1 and MAPK3 inhibits GAP function and localizes ARGHAP35 away from newly forming focal adhesions and stress fibers in cells spreading on fibronectin. Phosphorylation at Ser-1476 and Thr-1480 by GSK3B requires priming by MAPK and inhibits RhoGAP activity and modulates polarized cell migration. As to expression, expressed in the developing kidneys. Expressed in all regions of the mature nervous system (at protein level). Detected in neutrophils (at protein level).

The protein localises to the cytoplasm. It localises to the cytoskeleton. The protein resides in the cilium basal body. It is found in the nucleus. Its subcellular location is the cell membrane. Functionally, rho GTPase-activating protein (GAP). Binds several acidic phospholipids which inhibits the Rho GAP activity to promote the Rac GAP activity. This binding is inhibited by phosphorylation by PRKCA. Involved in cell differentiation as well as cell adhesion and migration, plays an important role in retinal tissue morphogenesis, neural tube fusion, midline fusion of the cerebral hemispheres and mammary gland branching morphogenesis. Transduces signals from p21-ras to the nucleus, acting via the ras GTPase-activating protein (GAP). Transduces SRC-dependent signals from cell-surface adhesion molecules, such as laminin, to promote neurite outgrowth. Regulates axon outgrowth, guidance and fasciculation. Modulates Rho GTPase-dependent F-actin polymerization, organization and assembly, is involved in polarized cell migration and in the positive regulation of ciliogenesis and cilia elongation. During mammary gland development, is required in both the epithelial and stromal compartments for ductal outgrowth. Represses transcription of the glucocorticoid receptor by binding to the cis-acting regulatory sequence 5'-GAGAAAAGAAACTGGAGAAACTC-3'; this function is however unclear and would need additional experimental evidences. This chain is Rho GTPase-activating protein 35, found in Mus musculus (Mouse).